The sequence spans 361 residues: Phospho-N-acetylmuramoyl-pentapeptide-transferase (361 aa).

10 helical membrane passes run 28 to 48 (LAAL…IRSL), 73 to 93 (TMGG…WADL), 97 to 117 (YIWV…VDDY), 134 to 154 (FFWQ…TADL), 168 to 188 (VAIP…IVGT), 200 to 220 (GLAI…AYVA), 237 to 257 (AGEL…FLWF), 264 to 284 (VFMG…ITVI), 289 to 309 (IVLV…MIQV), and 338 to 358 (QVVV…LSTL).

Belongs to the glycosyltransferase 4 family. MraY subfamily. It depends on Mg(2+) as a cofactor.

It is found in the cell inner membrane. It catalyses the reaction UDP-N-acetyl-alpha-D-muramoyl-L-alanyl-gamma-D-glutamyl-meso-2,6-diaminopimeloyl-D-alanyl-D-alanine + di-trans,octa-cis-undecaprenyl phosphate = di-trans,octa-cis-undecaprenyl diphospho-N-acetyl-alpha-D-muramoyl-L-alanyl-D-glutamyl-meso-2,6-diaminopimeloyl-D-alanyl-D-alanine + UMP. Its pathway is cell wall biogenesis; peptidoglycan biosynthesis. In terms of biological role, catalyzes the initial step of the lipid cycle reactions in the biosynthesis of the cell wall peptidoglycan: transfers peptidoglycan precursor phospho-MurNAc-pentapeptide from UDP-MurNAc-pentapeptide onto the lipid carrier undecaprenyl phosphate, yielding undecaprenyl-pyrophosphoryl-MurNAc-pentapeptide, known as lipid I. The protein is Phospho-N-acetylmuramoyl-pentapeptide-transferase of Nitrosomonas europaea (strain ATCC 19718 / CIP 103999 / KCTC 2705 / NBRC 14298).